Reading from the N-terminus, the 412-residue chain is MTANPTSIHQRLDRRLSGFSLEQPFYTSPEVYALDLQHIFYKQWLYAVPVCQLAKAGSYTTLRVGAYEVVIVRSRDGEVRAFHNSCRHRGSLICKARQGQVAKLVCPYHQWTYELDGKLIWANDMGPDFDASKYGLKPVNLRNLDGLIYICLSDTPPDFQTFAQLARPYLEVHDLKDAKVAFTSTIIEKGNWKLVWENNRECYHCSSNHPALCRSFPLDPEVAGVQADGGVSKKLQAHFDRCEAAGTPAQFVLAGDGQYRLARMPLQEKALSYTMDGKAAVSRHLGRVAPPDAGTLLMFHYPSTWNHFLPDHSLTFRVMPISPTETEVTTTWLVHKDAVEGVDYDLKRLTEVWIATNDEDREIVETNQQGILSPAYVPGPYSPGQESGVMQFVDWYAASLERALAPRQVAAE.

In terms of domain architecture, Rieske spans Leu-45–Ile-150. [2Fe-2S] cluster-binding residues include Cys-86, His-88, Cys-106, and His-109. 3 residues coordinate Fe cation: His-204, His-209, and Asp-360.

The protein belongs to the bacterial ring-hydroxylating dioxygenase alpha subunit family. As to quaternary structure, homotrimer. The system is probably composed of an oxygenase subunit (Stc2) and two reductase subunits (Stc3 and Stc4). It depends on [2Fe-2S] cluster as a cofactor. Fe cation is required as a cofactor.

It carries out the reaction L-proline betaine + NADH + O2 + H(+) = N-methyl-L-proline + formaldehyde + NAD(+) + H2O. The enzyme catalyses L-proline betaine + NADPH + O2 + H(+) = N-methyl-L-proline + formaldehyde + NADP(+) + H2O. Its function is as follows. Monooxygenase involved in the catabolism of stachydrine (L-proline betaine), a source of carbon and nitrogen. Part of a Rieske-type oxygenase system that catalyzes the demethylation of stachydrine to produce N-methyl-L-proline (monomethylproline). Stc2 is the catalytic subunit. This chain is Stachydrine N-demethylase, found in Rhizobium meliloti (strain 1021) (Ensifer meliloti).